A 598-amino-acid polypeptide reads, in one-letter code: Serine/threonine-protein kinase PLK1 (598 aa).

Residues 1 to 26 are disordered; sequence MAQVAGKKLTVAPEAGKPPGIPGSSS. A phosphoserine mark is found at Ser-25 and Ser-26. A Protein kinase domain is found at 44–296; sequence YLRGRFLGKG…IDDLLNDEFF (253 aa). Residues 50–58, Lys-73, and Glu-122 contribute to the ATP site; that span reads LGKGGFAKC. The active-site Proton acceptor is the Asp-167. ATP contacts are provided by residues 169-172 and Asp-185; that span reads KLGN. The segment at 185–212 is activation loop; sequence DFGLATKVEYDGERKKTLCGTPNYIAPE. Position 201 is a phosphothreonine (Thr-201). Ser-260 and Ser-326 each carry phosphoserine; by autocatalysis. The short motif at 328–331 is the D-box that targets the protein for proteasomal degradation in anaphase element; that stretch reads RKPL. Residues 336 to 360 are disordered; the sequence is KGQDSPLVEKQSVPAKEEEMQQPES. Ser-340 carries the phosphoserine modification. Residues 404–482 form the POLO box 1 domain; sequence WVSKWVDYSD…LKYFRNYMSE (79 aa). A linker region spans residues 487-501; that stretch reads AGANITPREGDELAR. The 83-residue stretch at 504 to 586 folds into the POLO box 2 domain; the sequence is FLRTWFRTRS…ARTMVEKLQS (83 aa). Residues 532 to 534 are important for interaction with phosphorylated proteins; the sequence is HTK.

The protein belongs to the protein kinase superfamily. Ser/Thr protein kinase family. As to quaternary structure, interacts with plk1 and kif2a. Interacts with fbxo5. In terms of processing, activated by phosphorylation on Thr-201 during M phase. Post-translationally, protein levels are down-regulated by proteasomal degradation in anaphase.

It is found in the nucleus. Its subcellular location is the cytoplasm. It localises to the cytoskeleton. The protein resides in the microtubule organizing center. The protein localises to the centrosome. It is found in the spindle. Its subcellular location is the midbody. The enzyme catalyses L-seryl-[protein] + ATP = O-phospho-L-seryl-[protein] + ADP + H(+). It carries out the reaction L-threonyl-[protein] + ATP = O-phospho-L-threonyl-[protein] + ADP + H(+). Plays multiple essential roles during mitosis. Phosphorylates the N-terminal domain of cdc25, which leads to cyclin b-cdc2 activation and mitotic entry. Also required for organization of bipolar spindles, and for exit from mitosis. Phosphorylates tpx2. In Xenopus tropicalis (Western clawed frog), this protein is Serine/threonine-protein kinase PLK1 (plk1).